The following is a 1473-amino-acid chain: DNA topoisomerase 2 (1473 aa).

The tract at residues 1–20 (MATKLPLQNSNAANVAKAPA) is disordered. A compositionally biased stretch (low complexity) spans 9–20 (NSNAANVAKAPA). Residues N91, N120, 148-150 (SSN), and 161-168 (GRNGYGAK) each bind ATP. The interval 345–347 (NKK) is interaction with DNA. ATP is bound at residue 378 to 380 (QTK). The region spanning 455–569 (CTLILTEGDS…SLLQVPSFLV (115 aa)) is the Toprim domain. 3 residues coordinate Mg(2+): E461, D538, and D540. A Topo IIA-type catalytic domain is found at 704-1163 (IPSMVDGLKP…TPKSLWLSDL (460 aa)). The active-site O-(5'-phospho-DNA)-tyrosine intermediate is Y794. Residues 980–989 (KLTTTIATSN) are interaction with DNA. 3 disordered regions span residues 1195-1230 (SGAA…SYSA), 1242-1297 (KPKA…EVEE), and 1313-1473 (GSAP…EDDE). 2 stretches are compositionally biased toward basic residues: residues 1200 to 1216 (KVKR…KTTK) and 1278 to 1288 (PKGRQGAKKKA). Positions 1351 to 1360 (KPAATKAAKP) are enriched in low complexity. 2 stretches are compositionally biased toward polar residues: residues 1394 to 1404 (SPFNKKSSSVM) and 1417 to 1427 (ENVAGNSSSEK). Residues 1453–1473 (SESESANDSEFDDIEDDEDDE) show a composition bias toward acidic residues.

This sequence belongs to the type II topoisomerase family. Homodimer. It depends on Mg(2+) as a cofactor. Mn(2+) is required as a cofactor. The cofactor is Ca(2+).

The catalysed reaction is ATP-dependent breakage, passage and rejoining of double-stranded DNA.. Control of topological states of DNA by transient breakage and subsequent rejoining of DNA strands. Topoisomerase II makes double-strand breaks. This chain is DNA topoisomerase 2 (TOP2), found in Arabidopsis thaliana (Mouse-ear cress).